The following is an 89-amino-acid chain: Acylphosphatase (89 aa).

One can recognise an Acylphosphatase-like domain in the interval 4–89 (SRRFLVSGTV…EQPPEGFRVL (86 aa)). Active-site residues include R19 and N37.

Belongs to the acylphosphatase family.

The enzyme catalyses an acyl phosphate + H2O = a carboxylate + phosphate + H(+). This Alkalilimnicola ehrlichii (strain ATCC BAA-1101 / DSM 17681 / MLHE-1) protein is Acylphosphatase (acyP).